A 157-amino-acid chain; its full sequence is Transcriptional repressor NrdR (157 aa).

A zinc finger spans residues 3-34 (CPFCRHPDSRVVDSRTSDDGLSIRRRRQCPEC). Residues 46-136 (LSVIKRNGVV…VYQGFDSLDD (91 aa)) enclose the ATP-cone domain.

This sequence belongs to the NrdR family. Requires Zn(2+) as cofactor.

Functionally, negatively regulates transcription of bacterial ribonucleotide reductase nrd genes and operons by binding to NrdR-boxes. This chain is Transcriptional repressor NrdR, found in Clavibacter sepedonicus (Clavibacter michiganensis subsp. sepedonicus).